Reading from the N-terminus, the 770-residue chain is Transferrin receptor protein 1 (770 aa).

At Met1–Cys70 the chain is on the cytoplasmic side. The interval Met1–Cys70 is mediates interaction with SH3BP4. 2 positions are modified to phosphoserine: Ser10 and Ser19. Position 20 is a phosphotyrosine (Tyr20). The Endocytosis signal signature appears at Tyr20–Phe23. At Thr21 the chain carries Phosphothreonine. Ser24 carries the post-translational modification Phosphoserine. Residues Lys61–Arg64 carry the Stop-transfer sequence motif. Residues Cys65 and Cys70 are each lipidated (S-palmitoyl cysteine). A helical; Signal-anchor for type II membrane protein transmembrane segment spans residues Tyr71–Gly90. The Extracellular portion of the chain corresponds to Tyr91–Phe770. Residues Glu102–Glu122 are disordered. An O-linked (GalNAc...) threonine glycan is attached at Thr107. A PA domain is found at Ser233–Phe323. Asn261, Asn327, and Asn384 each carry an N-linked (GlcNAc...) asparagine glycan. The interval Thr579–Phe770 is ligand-binding. Residues Arg656–Asp658 carry the Cell attachment site motif. Residues Asn732 and Asn737 are each glycosylated (N-linked (GlcNAc...) asparagine).

It belongs to the peptidase M28 family. M28B subfamily. In terms of assembly, homodimer; disulfide-linked. Binds one transferrin molecule per subunit. Interacts with SH3BP4. Interacts with STEAP3; facilitates TFRC endocytosis in erythroid precursor cells. In terms of processing, stearoylated by ZDHHC6 which inhibits TFRC-mediated activation of the JNK pathway and promotes mitochondrial fragmentation. Stearoylation does not affect iron uptake. Post-translationally, N- and O-glycosylated, phosphorylated and palmitoylated.

It is found in the cell membrane. Its subcellular location is the melanosome. Cellular uptake of iron occurs via receptor-mediated endocytosis of ligand-occupied transferrin receptor into specialized endosomes. Endosomal acidification leads to iron release. The apotransferrin-receptor complex is then recycled to the cell surface with a return to neutral pH and the concomitant loss of affinity of apotransferrin for its receptor. Transferrin receptor is necessary for development of erythrocytes and the nervous system. Positively regulates T and B cell proliferation through iron uptake. Acts as a lipid sensor that regulates mitochondrial fusion by regulating activation of the JNK pathway. When dietary levels of stearate (C18:0) are low, promotes activation of the JNK pathway, resulting in HUWE1-mediated ubiquitination and subsequent degradation of the mitofusin MFN2 and inhibition of mitochondrial fusion. When dietary levels of stearate (C18:0) are high, TFRC stearoylation inhibits activation of the JNK pathway and thus degradation of the mitofusin MFN2. Mediates uptake of NICOL1 into fibroblasts where it may regulate extracellular matrix production. This is Transferrin receptor protein 1 (TFRC) from Canis lupus familiaris (Dog).